The sequence spans 301 residues: Aspartate carbamoyltransferase catalytic subunit (301 aa).

Residues R46 and T47 each coordinate carbamoyl phosphate. K74 is an L-aspartate binding site. Residues R96, H124, and Q127 each contribute to the carbamoyl phosphate site. Positions 157 and 208 each coordinate L-aspartate. 2 residues coordinate carbamoyl phosphate: A249 and P250.

The protein belongs to the aspartate/ornithine carbamoyltransferase superfamily. ATCase family. Heterododecamer (2C3:3R2) of six catalytic PyrB chains organized as two trimers (C3), and six regulatory PyrI chains organized as three dimers (R2).

The enzyme catalyses carbamoyl phosphate + L-aspartate = N-carbamoyl-L-aspartate + phosphate + H(+). The protein operates within pyrimidine metabolism; UMP biosynthesis via de novo pathway; (S)-dihydroorotate from bicarbonate: step 2/3. Functionally, catalyzes the condensation of carbamoyl phosphate and aspartate to form carbamoyl aspartate and inorganic phosphate, the committed step in the de novo pyrimidine nucleotide biosynthesis pathway. This chain is Aspartate carbamoyltransferase catalytic subunit, found in Bacillus cereus (strain ATCC 14579 / DSM 31 / CCUG 7414 / JCM 2152 / NBRC 15305 / NCIMB 9373 / NCTC 2599 / NRRL B-3711).